Reading from the N-terminus, the 203-residue chain is GTP cyclohydrolase-2 (203 aa).

Arginine 49–glutamate 53 lines the GTP pocket. Zn(2+) contacts are provided by cysteine 54, cysteine 65, and cysteine 67. GTP contacts are provided by residues glutamine 70, glutamate 92–arginine 94, and threonine 114. Aspartate 126 acts as the Proton acceptor in catalysis. The Nucleophile role is filled by arginine 128. GTP is bound by residues threonine 149 and lysine 154.

The protein belongs to the GTP cyclohydrolase II family. Requires Zn(2+) as cofactor.

The catalysed reaction is GTP + 4 H2O = 2,5-diamino-6-hydroxy-4-(5-phosphoribosylamino)-pyrimidine + formate + 2 phosphate + 3 H(+). Its pathway is cofactor biosynthesis; riboflavin biosynthesis; 5-amino-6-(D-ribitylamino)uracil from GTP: step 1/4. Functionally, catalyzes the conversion of GTP to 2,5-diamino-6-ribosylamino-4(3H)-pyrimidinone 5'-phosphate (DARP), formate and pyrophosphate. This Shewanella sp. (strain MR-7) protein is GTP cyclohydrolase-2.